A 170-amino-acid chain; its full sequence is Protein SprT (170 aa).

Residues arginine 19–arginine 163 enclose the SprT-like domain. Histidine 78 contributes to the Zn(2+) binding site. Glutamate 79 is a catalytic residue. Histidine 82 is a Zn(2+) binding site.

Belongs to the SprT family. It depends on Zn(2+) as a cofactor.

The protein localises to the cytoplasm. This is Protein SprT from Erwinia tasmaniensis (strain DSM 17950 / CFBP 7177 / CIP 109463 / NCPPB 4357 / Et1/99).